The primary structure comprises 255 residues: Ribonuclease HII (255 aa).

One can recognise an RNase H type-2 domain in the interval 70–255 (DLVAGIDEVG…FEPVPEFLIK (186 aa)). Aspartate 76, glutamate 77, and aspartate 168 together coordinate a divalent metal cation.

The protein belongs to the RNase HII family. Requires Mn(2+) as cofactor. It depends on Mg(2+) as a cofactor.

The protein localises to the cytoplasm. It catalyses the reaction Endonucleolytic cleavage to 5'-phosphomonoester.. Endonuclease that specifically degrades the RNA of RNA-DNA hybrids. This is Ribonuclease HII from Pediococcus pentosaceus (strain ATCC 25745 / CCUG 21536 / LMG 10740 / 183-1w).